The primary structure comprises 367 residues: MDLDCQADIADLDTTLTTVERVLDVDGLRARIKTLEEAAADPNLWDDQARGQQVTSQLSHAQGELRRVEELRSRLDDLPVLYELAEESEDNSVVAEADAERVKLREDIEAMEVRTLLSGEYDEREAVVTIRSGAGGVDAADWAEMLMRMYIRWAEAHKYPVEVFDTSYAEEAGIKSATFAVHAPFAYGTLSVEQGTHRLVRISPFDNQSRRQTSFADVEVLPVVETTDHIDIPEGDLRVDVYRSSGPGGQSVNTTDSAVRLTHIPTGIVVTCQNEKSQLQNKVAAMRVLQARLLERKRQEERAEMDALKGDGGSSWGTQMRSYVLQPYQMVKDLRTEYEVGNPAAVLDGDIDGFIEAGIRWRNRRDD.

Gln-250 is modified (N5-methylglutamine).

The protein belongs to the prokaryotic/mitochondrial release factor family. Post-translationally, methylated by PrmC. Methylation increases the termination efficiency of RF2.

The protein resides in the cytoplasm. Its function is as follows. Peptide chain release factor 2 directs the termination of translation in response to the peptide chain termination codons UGA and UAA. This Mycobacteroides abscessus (strain ATCC 19977 / DSM 44196 / CCUG 20993 / CIP 104536 / JCM 13569 / NCTC 13031 / TMC 1543 / L948) (Mycobacterium abscessus) protein is Peptide chain release factor 2.